The sequence spans 505 residues: 2,3-bisphosphoglycerate-independent phosphoglycerate mutase (505 aa).

Mn(2+) is bound by residues aspartate 11 and serine 61. The Phosphoserine intermediate role is filled by serine 61. Substrate contacts are provided by residues histidine 122, 152–153 (RD), arginine 183, arginine 189, 259–262 (RTDR), and lysine 332. Mn(2+)-binding residues include aspartate 399, histidine 403, aspartate 440, histidine 441, and histidine 458.

This sequence belongs to the BPG-independent phosphoglycerate mutase family. In terms of assembly, monomer. Requires Mn(2+) as cofactor.

The catalysed reaction is (2R)-2-phosphoglycerate = (2R)-3-phosphoglycerate. It functions in the pathway carbohydrate degradation; glycolysis; pyruvate from D-glyceraldehyde 3-phosphate: step 3/5. Its function is as follows. Catalyzes the interconversion of 2-phosphoglycerate and 3-phosphoglycerate. This is 2,3-bisphosphoglycerate-independent phosphoglycerate mutase from Flavobacterium psychrophilum (strain ATCC 49511 / DSM 21280 / CIP 103535 / JIP02/86).